Consider the following 71-residue polypeptide: Exodeoxyribonuclease 7 small subunit (71 aa).

The protein belongs to the XseB family. As to quaternary structure, heterooligomer composed of large and small subunits.

Its subcellular location is the cytoplasm. The enzyme catalyses Exonucleolytic cleavage in either 5'- to 3'- or 3'- to 5'-direction to yield nucleoside 5'-phosphates.. Its function is as follows. Bidirectionally degrades single-stranded DNA into large acid-insoluble oligonucleotides, which are then degraded further into small acid-soluble oligonucleotides. This Streptococcus suis (strain 98HAH33) protein is Exodeoxyribonuclease 7 small subunit.